A 595-amino-acid chain; its full sequence is Merlin (595 aa).

Ser13 carries the phosphoserine modification. The FERM domain maps to 22–311 (FTVRIVTMDA…GNHDLFMRRR (290 aa)). Position 518 is a phosphoserine; by PAK (Ser518).

As to quaternary structure, interacts with NHERF1, HGS and AGAP2. Interacts with SGSM3. Interacts (via FERM domain) with MPP1. Interacts with LAYN and WWC1. Interacts with the CUL4A-RBX1-DDB1-VprBP/DCAF1 E3 ubiquitin-protein ligase complex. The unphosphorylated form interacts (via FERM domain) with VPRBP/DCAF1. Interacts (via FERM domain) with NOP53; the interaction is direct. Interacts with SCHIP1; the interaction is direct. In terms of processing, phosphorylation of Ser-518 inhibits nuclear localization by disrupting the intramolecular association of the FERM domain with the C-terminal tail. Ubiquitinated by the CUL4A-RBX1-DDB1-DCAF1/VprBP E3 ubiquitin-protein ligase complex for ubiquitination and subsequent proteasome-dependent degradation. Post-translationally, phosphorylation of Ser-518 inhibits nuclear localization by disrupting the intramolecular association of the FERM domain with the C-terminal tail. The dephosphorylation of Ser-518 favors the interaction with NOP53.

It is found in the cell membrane. It localises to the cell projection. Its subcellular location is the cytoplasm. The protein localises to the cytoskeleton. The protein resides in the nucleus. Probable regulator of the Hippo/SWH (Sav/Wts/Hpo) signaling pathway, a signaling pathway that plays a pivotal role in tumor suppression by restricting proliferation and promoting apoptosis. Along with WWC1 can synergistically induce the phosphorylation of LATS1 and LATS2 and can probably function in the regulation of the Hippo/SWH (Sav/Wts/Hpo) signaling pathway. May act as a membrane stabilizing protein. May inhibit PI3 kinase by binding to AGAP2 and impairing its stimulating activity. Suppresses cell proliferation and tumorigenesis by inhibiting the CUL4A-RBX1-DDB1-VprBP/DCAF1 E3 ubiquitin-protein ligase complex. This is Merlin (NF2) from Papio anubis (Olive baboon).